Consider the following 251-residue polypeptide: D-aminoacyl-tRNA deacylase (251 aa).

Belongs to the DtdA deacylase family. Monomer. Requires Zn(2+) as cofactor.

It catalyses the reaction a D-aminoacyl-tRNA + H2O = a tRNA + a D-alpha-amino acid + H(+). The catalysed reaction is glycyl-tRNA(Ala) + H2O = tRNA(Ala) + glycine + H(+). D-aminoacyl-tRNA deacylase with broad substrate specificity. By recycling D-aminoacyl-tRNA to D-amino acids and free tRNA molecules, this enzyme counteracts the toxicity associated with the formation of D-aminoacyl-tRNA entities in vivo. The sequence is that of D-aminoacyl-tRNA deacylase from Pyrobaculum calidifontis (strain DSM 21063 / JCM 11548 / VA1).